The sequence spans 464 residues: 3-deoxy-D-manno-octulosonic acid transferase (464 aa).

Residues 2–22 form a helical; Signal-anchor membrane-spanning segment; it reads MLLYYALSFILLPIYFIIILI. Residues 47-93 enclose the RPE1 insert domain; that stretch reads YSLDFLHNEANKERFKGDTERRTAAYTSVREDSSTGSTSKLPLEASY. E107 (proton acceptor) is an active-site residue. Residues 311 to 312, 352 to 354, and 377 to 380 contribute to the CMP site; these read PR, FGE, and NILE.

Belongs to the glycosyltransferase group 1 family.

It is found in the cell inner membrane. It carries out the reaction lipid IVA (E. coli) + CMP-3-deoxy-beta-D-manno-octulosonate = alpha-Kdo-(2-&gt;6)-lipid IVA (E. coli) + CMP + H(+). Its pathway is bacterial outer membrane biogenesis; LPS core biosynthesis. Its function is as follows. Involved in lipopolysaccharide (LPS) biosynthesis. Catalyzes the transfer of 3-deoxy-D-manno-octulosonate (Kdo) residue(s) from CMP-Kdo to lipid IV(A), the tetraacyldisaccharide-1,4'-bisphosphate precursor of lipid A. The chain is 3-deoxy-D-manno-octulosonic acid transferase (waaA) from Rickettsia felis (strain ATCC VR-1525 / URRWXCal2) (Rickettsia azadi).